The primary structure comprises 251 residues: Ubiquinone/menaquinone biosynthesis C-methyltransferase UbiE (251 aa).

Residues Thr-74, Asp-95, and 123–124 (NA) contribute to the S-adenosyl-L-methionine site.

It belongs to the class I-like SAM-binding methyltransferase superfamily. MenG/UbiE family.

The enzyme catalyses a 2-demethylmenaquinol + S-adenosyl-L-methionine = a menaquinol + S-adenosyl-L-homocysteine + H(+). It catalyses the reaction a 2-methoxy-6-(all-trans-polyprenyl)benzene-1,4-diol + S-adenosyl-L-methionine = a 5-methoxy-2-methyl-3-(all-trans-polyprenyl)benzene-1,4-diol + S-adenosyl-L-homocysteine + H(+). It participates in quinol/quinone metabolism; menaquinone biosynthesis; menaquinol from 1,4-dihydroxy-2-naphthoate: step 2/2. It functions in the pathway cofactor biosynthesis; ubiquinone biosynthesis. In terms of biological role, methyltransferase required for the conversion of demethylmenaquinol (DMKH2) to menaquinol (MKH2) and the conversion of 2-polyprenyl-6-methoxy-1,4-benzoquinol (DDMQH2) to 2-polyprenyl-3-methyl-6-methoxy-1,4-benzoquinol (DMQH2). The sequence is that of Ubiquinone/menaquinone biosynthesis C-methyltransferase UbiE from Shewanella halifaxensis (strain HAW-EB4).